Reading from the N-terminus, the 67-residue chain is Peptide Hp1036 (67 aa).

An N-terminal signal peptide occupies residues 1-23; it reads MKTQFAILLITLVLFQMFSQSDA. Phe36 carries the post-translational modification Phenylalanine amide. A propeptide spanning residues 40 to 67 is cleaved from the precursor; the sequence is GLNDLSDLDELFDGEISEADVDFLREIM.

Belongs to the non-disulfide-bridged peptide (NDBP) superfamily. Short antimicrobial peptide (group 4) family. Expressed by the venom gland.

The protein localises to the secreted. It localises to the target cell membrane. Amphipathic peptide with antibacterial activities. Shows antiviral activities against the herpes simplex virus type-1. It potently inhibits the initial infection by provoking the rupture of viral envelop and the dissociation of proteins from the virions (EC(50) is 0.43 uM). It also effectively inhibits viral attachment (EC(50) is 2.87 uM), viral entry (EC(50) is 4.29 uM) and viral proliferation after infection (EC(50) is 7.86). Morever, it enters mammalian tested cells (Vero) and reduces the intracellular infectivity. The sequence is that of Peptide Hp1036 from Heterometrus petersii (Asian forest scorpion).